The chain runs to 372 residues: Glutamate 5-kinase (372 aa).

Lysine 14 lines the ATP pocket. Residues serine 54, aspartate 141, and asparagine 153 each contribute to the substrate site. 173–174 (TD) lines the ATP pocket. The PUA domain maps to 280–358 (RGHVVIDAGA…GEIESVLGYM (79 aa)).

The protein belongs to the glutamate 5-kinase family.

The protein resides in the cytoplasm. The enzyme catalyses L-glutamate + ATP = L-glutamyl 5-phosphate + ADP. It participates in amino-acid biosynthesis; L-proline biosynthesis; L-glutamate 5-semialdehyde from L-glutamate: step 1/2. Catalyzes the transfer of a phosphate group to glutamate to form L-glutamate 5-phosphate. This is Glutamate 5-kinase from Burkholderia lata (strain ATCC 17760 / DSM 23089 / LMG 22485 / NCIMB 9086 / R18194 / 383).